We begin with the raw amino-acid sequence, 328 residues long: Apoptosis facilitator Bcl-2-like protein 14 (328 aa).

At Ser44 the chain carries Phosphoserine. The BH3 signature appears at 213-227; that stretch reads IVELLKFSGDQLGRE. Positions 309–316 match the BH2 motif; sequence WVQQNGGW.

The protein belongs to the Bcl-2 family. In terms of processing, phosphorylated by MELK, leading to inhibit its pro-apoptotic function.

Its subcellular location is the cytoplasm. Its function is as follows. Plays a role in apoptosis. This chain is Apoptosis facilitator Bcl-2-like protein 14 (Bcl2l14), found in Mus musculus (Mouse).